We begin with the raw amino-acid sequence, 745 residues long: GTPase-activating protein GYP7 (745 aa).

The Rab-GAP TBC domain maps to 391 to 623 (LADDATRKEV…NIWEVFFTDF (233 aa)).

In terms of biological role, most effectively accelerate the intrinsic GTPase activity of YPT7. It is also active, but to a lesser extent, on YPT31, YPT32 and YPT1. YPT6 and SEC4. This Candida glabrata (strain ATCC 2001 / BCRC 20586 / JCM 3761 / NBRC 0622 / NRRL Y-65 / CBS 138) (Yeast) protein is GTPase-activating protein GYP7 (GYP7).